The following is a 795-amino-acid chain: Putative replication origin-binding protein (795 aa).

The Helicase ATP-binding domain occupies 121–289 (WLSNDKIKTL…DNFGKSIVVN (169 aa)). 134 to 141 (SPMGTGKT) provides a ligand contact to ATP.

Belongs to the mimivirus R1 family.

Probably involved in DNA replication. May bind the genome origin of replication (ori). The chain is Putative replication origin-binding protein from Acanthamoeba polyphaga (Amoeba).